A 310-amino-acid polypeptide reads, in one-letter code: Tyrosine recombinase XerC (310 aa).

Residues 11-97 enclose the Core-binding (CB) domain; the sequence is NSLQKPLERF…SLRSFFDFLI (87 aa). One can recognise a Tyr recombinase domain in the interval 118–298; it reads PLPKNLDVDE…DFQHLAQAYD (181 aa). Residues arginine 157, lysine 181, histidine 250, arginine 253, and histidine 276 contribute to the active site. Residue tyrosine 285 is the O-(3'-phospho-DNA)-tyrosine intermediate of the active site.

This sequence belongs to the 'phage' integrase family. XerC subfamily. In terms of assembly, forms a cyclic heterotetrameric complex composed of two molecules of XerC and two molecules of XerD.

It localises to the cytoplasm. Functionally, site-specific tyrosine recombinase, which acts by catalyzing the cutting and rejoining of the recombining DNA molecules. The XerC-XerD complex is essential to convert dimers of the bacterial chromosome into monomers to permit their segregation at cell division. It also contributes to the segregational stability of plasmids. This is Tyrosine recombinase XerC from Vibrio parahaemolyticus serotype O3:K6 (strain RIMD 2210633).